Here is a 124-residue protein sequence, read N- to C-terminus: Profilin-2 (124 aa).

The protein belongs to the profilin family. As to quaternary structure, occurs in many kinds of cells as a complex with monomeric actin in a 1:1 ratio. Interacts with forH.

The protein resides in the cytoplasm. It localises to the cytoskeleton. Binds to actin and affects the structure of the cytoskeleton. At high concentrations, profilin prevents the polymerization of actin, whereas it enhances it at low concentrations. By binding to PIP2, it inhibits the formation of IP3 and DG. The protein is Profilin-2 (proB) of Dictyostelium discoideum (Social amoeba).